The chain runs to 106 residues: Large ribosomal subunit protein uL24 (106 aa).

It belongs to the universal ribosomal protein uL24 family. Part of the 50S ribosomal subunit.

In terms of biological role, one of two assembly initiator proteins, it binds directly to the 5'-end of the 23S rRNA, where it nucleates assembly of the 50S subunit. One of the proteins that surrounds the polypeptide exit tunnel on the outside of the subunit. The protein is Large ribosomal subunit protein uL24 of Delftia acidovorans (strain DSM 14801 / SPH-1).